We begin with the raw amino-acid sequence, 113 residues long: uncharacterized protein (113 aa).

Transmembrane regions (helical) follow at residues 9 to 31, 36 to 58, and 71 to 90; these read IFPS…SVIY, VLTI…YKFQ, and IMAL…VVAV.

The protein resides in the cell membrane. This is an uncharacterized protein from Archaeoglobus fulgidus (strain ATCC 49558 / DSM 4304 / JCM 9628 / NBRC 100126 / VC-16).